The chain runs to 83 residues: Kunitz-type serine protease inhibitor vestiginin-3 (83 aa).

Residues 1 to 24 form the signal peptide; that stretch reads MSSGGLLLLLGLLTLWAELTPVSS. The 51-residue stretch at 31–81 folds into the BPTI/Kunitz inhibitor domain; sequence CKLPKEPGPCRSYLLYFYYNSVEHKCQTFHYGGCEGNENRFHTIEECKSTC. 3 disulfide bridges follow: Cys-31/Cys-81, Cys-40/Cys-64, and Cys-56/Cys-77.

Belongs to the venom Kunitz-type family. In terms of tissue distribution, expressed by the venom gland.

The protein resides in the secreted. Serine protease inhibitor. The sequence is that of Kunitz-type serine protease inhibitor vestiginin-3 from Demansia vestigiata (Lesser black whip snake).